A 159-amino-acid polypeptide reads, in one-letter code: Ribosomal RNA large subunit methyltransferase H (159 aa).

S-adenosyl-L-methionine is bound by residues Leu76, Gly108, and 127-132 (FGLLTL).

Belongs to the RNA methyltransferase RlmH family. As to quaternary structure, homodimer.

The protein localises to the cytoplasm. The catalysed reaction is pseudouridine(1915) in 23S rRNA + S-adenosyl-L-methionine = N(3)-methylpseudouridine(1915) in 23S rRNA + S-adenosyl-L-homocysteine + H(+). Specifically methylates the pseudouridine at position 1915 (m3Psi1915) in 23S rRNA. This chain is Ribosomal RNA large subunit methyltransferase H, found in Streptococcus pyogenes serotype M18 (strain MGAS8232).